The sequence spans 207 residues: Small ribosomal subunit protein uS4 (207 aa).

A compositionally biased stretch (basic and acidic residues) spans 31–40 (KCRLDNKPGQ). A disordered region spans residues 31 to 56 (KCRLDNKPGQDGRTSGSRTSDYGNQL). The span at 42 to 53 (GRTSGSRTSDYG) shows a compositional bias: polar residues. In terms of domain architecture, S4 RNA-binding spans 97–158 (SRLDNVVYRM…KAKKQARITE (62 aa)).

The protein belongs to the universal ribosomal protein uS4 family. In terms of assembly, part of the 30S ribosomal subunit. Contacts protein S5. The interaction surface between S4 and S5 is involved in control of translational fidelity.

One of the primary rRNA binding proteins, it binds directly to 16S rRNA where it nucleates assembly of the body of the 30S subunit. Functionally, with S5 and S12 plays an important role in translational accuracy. The sequence is that of Small ribosomal subunit protein uS4 from Polynucleobacter necessarius subsp. necessarius (strain STIR1).